A 428-amino-acid chain; its full sequence is Adenylosuccinate synthetase (428 aa).

GTP is bound by residues 12 to 18 and 40 to 42; these read GDEGKGK and GHT. D13 acts as the Proton acceptor in catalysis. Residues D13 and G40 each contribute to the Mg(2+) site. IMP is bound by residues 13–16, 38–41, T128, R142, Q223, T238, and R302; these read DEGK and NAGH. H41 serves as the catalytic Proton donor. A substrate-binding site is contributed by 298–304; the sequence is TTTGRPR. GTP-binding positions include R304, 330 to 332, and 412 to 414; these read SID and SVG.

Belongs to the adenylosuccinate synthetase family. As to quaternary structure, homodimer. Mg(2+) is required as a cofactor.

The protein localises to the cytoplasm. The enzyme catalyses IMP + L-aspartate + GTP = N(6)-(1,2-dicarboxyethyl)-AMP + GDP + phosphate + 2 H(+). The protein operates within purine metabolism; AMP biosynthesis via de novo pathway; AMP from IMP: step 1/2. Plays an important role in the de novo pathway of purine nucleotide biosynthesis. Catalyzes the first committed step in the biosynthesis of AMP from IMP. The sequence is that of Adenylosuccinate synthetase from Geobacillus sp. (strain WCH70).